Here is a 44-residue protein sequence, read N- to C-terminus: Cytochrome b559 subunit beta (44 aa).

Residues 19-35 (WLSIHALAVPTIFFLGS) traverse the membrane as a helical segment. Residue His23 coordinates heme.

Belongs to the PsbE/PsbF family. In terms of assembly, heterodimer of an alpha subunit and a beta subunit. PSII is composed of 1 copy each of membrane proteins PsbA, PsbB, PsbC, PsbD, PsbE, PsbF, PsbH, PsbI, PsbJ, PsbK, PsbL, PsbM, PsbT, PsbX, PsbY, PsbZ, Psb30/Ycf12, at least 3 peripheral proteins of the oxygen-evolving complex and a large number of cofactors. It forms dimeric complexes. Heme b is required as a cofactor.

The protein localises to the plastid. It localises to the chloroplast thylakoid membrane. Its function is as follows. This b-type cytochrome is tightly associated with the reaction center of photosystem II (PSII). PSII is a light-driven water:plastoquinone oxidoreductase that uses light energy to abstract electrons from H(2)O, generating O(2) and a proton gradient subsequently used for ATP formation. It consists of a core antenna complex that captures photons, and an electron transfer chain that converts photonic excitation into a charge separation. The sequence is that of Cytochrome b559 subunit beta from Tetradesmus obliquus (Green alga).